A 655-amino-acid chain; its full sequence is p-hydroxybenzoic acid efflux pump subunit AaeB (655 aa).

Residues 1-12 lie on the Periplasmic side of the membrane; the sequence is MGIFSIANQHIR. A helical transmembrane segment spans residues 13 to 33; sequence FAVKLATAIVLALFVGFHFQL. The Cytoplasmic portion of the chain corresponds to 34–37; it reads ETPR. A helical membrane pass occupies residues 38–58; it reads WAVLTAAIVAAGTAFAAGGEP. Residues 59-68 lie on the Periplasmic side of the membrane; it reads YSGAIRYRGF. A helical transmembrane segment spans residues 69–89; that stretch reads LRIIGTFIGCIAGLVIIIAMI. The Cytoplasmic portion of the chain corresponds to 90–92; that stretch reads RAP. A helical transmembrane segment spans residues 93 to 113; it reads LLMILVCCIWAGFCTWISSLV. Over 114–120 the chain is Periplasmic; sequence RIENSYA. A helical transmembrane segment spans residues 121–141; that stretch reads WGLAGYTALIIVITIQPEPLL. Topologically, residues 142 to 151 are cytoplasmic; sequence TPQFAVERCS. Residues 152-172 traverse the membrane as a helical segment; it reads EIVIGIVCAIMADLLFSPRSI. The Periplasmic portion of the chain corresponds to 173–369; the sequence is KQEVDRELES…RTTLSCILGT (197 aa). Residues 370-390 form a helical membrane-spanning segment; that stretch reads LFWLWTGWTSGSGAMVMIAVV. Residues 391 to 406 lie on the Cytoplasmic side of the membrane; sequence TSLAMRLPNPRMVAID. A helical transmembrane segment spans residues 407–427; it reads FIYGTLAALPLGLLYFLVIIP. The Periplasmic portion of the chain corresponds to 428-430; it reads NTQ. The helical transmembrane segment at 431-451 threads the bilayer; it reads QSMLLLCISLAVLGFFLGIEV. Topologically, residues 452–458 are cytoplasmic; the sequence is QKRRLGS. A helical transmembrane segment spans residues 459-479; sequence MGALASTINIIVLDNPMTFHF. Topologically, residues 480–481 are periplasmic; it reads SQ. Residues 482 to 502 form a helical membrane-spanning segment; that stretch reads FLDSALGQIVGCVLAFTVILL. The Cytoplasmic portion of the chain corresponds to 503–655; the sequence is VRDKSRDRTG…HKYQHALTDS (153 aa).

The protein belongs to the aromatic acid exporter ArAE (TC 2.A.85) family.

The protein localises to the cell inner membrane. In terms of biological role, forms an efflux pump with AaeA. Could function as a metabolic relief valve, allowing to eliminate certain compounds when they accumulate to high levels in the cell. Substrates are p-hydroxybenzoic acid (pHBA), 6-hydroxy-2-naphthoic and 2-hydroxycinnamate. The protein is p-hydroxybenzoic acid efflux pump subunit AaeB of Escherichia coli (strain K12).